Here is a 536-residue protein sequence, read N- to C-terminus: Sensory rhodopsin I transducer (536 aa).

Topologically, residues 2–14 are cytoplasmic; the sequence is TIAWARRRYGVKL. The helical transmembrane segment at 15-29 threads the bilayer; that stretch reads GLGYIATAGLLVGVG. The Extracellular portion of the chain corresponds to 30 to 39; sequence VTTNDVPSTI. The helical transmembrane segment at 40 to 55 threads the bilayer; sequence VAGIAGLLTLGSINAA. The HAMP 1 domain maps to 55–107; the sequence is AETVASIKEIAAQTERVANGNLEQEVTSTRTDEFGSLADSIEQMRQSLRGRLN. Over 56 to 536 the chain is Cytoplasmic; sequence ETVASIKEIA…MRAGADGGGA (481 aa). Residues 116–145 form a disordered region; the sequence is LEETQAEAETAREEAEQAKQEAQAAEREAR. Basic and acidic residues predominate over residues 124–145; it reads ETAREEAEQAKQEAQAAEREAR. The HAMP 2 domain occupies 149-202; that stretch reads ATYQDTAKRYGETMEAAATGDLTQRVDVDTDHEAMETVGTAFNQMMDDLQATVR. Residues 221–459 form the Methyl-accepting transducer domain; it reads TSADIEASAG…STATSVERVA (239 aa). E266 is subject to Glutamate methyl ester (Glu). Positions 278 to 307 are disordered; it reads SEDVATASDAARDSSKSALDEMSSIETEVD. Residues 287–296 show a composition bias toward basic and acidic residues; that stretch reads AARDSSKSAL. Glutamate methyl ester (Glu) is present on E473. A disordered region spans residues 512 to 536; that stretch reads TEDSETAGGSVEQPVMRAGADGGGA.

This sequence belongs to the methyl-accepting chemotaxis (MCP) protein family. In terms of processing, methylated by CheR.

The protein localises to the cell membrane. Functionally, transduces signals from the phototaxis receptor sensory rhodopsin I (SR-I) to the flagellar motor. Responds to light changes through the variation of the level of methylation. The chain is Sensory rhodopsin I transducer (htr1) from Halobacterium salinarum (strain ATCC 29341 / DSM 671 / R1).